Reading from the N-terminus, the 221-residue chain is 7-cyano-7-deazaguanine synthase (221 aa).

Residue 9-19 coordinates ATP; it reads YSGGMDSFTVL. Residues cysteine 186, cysteine 194, cysteine 197, and cysteine 200 each coordinate Zn(2+).

The protein belongs to the QueC family. Zn(2+) is required as a cofactor.

The enzyme catalyses 7-carboxy-7-deazaguanine + NH4(+) + ATP = 7-cyano-7-deazaguanine + ADP + phosphate + H2O + H(+). It participates in purine metabolism; 7-cyano-7-deazaguanine biosynthesis. Functionally, catalyzes the ATP-dependent conversion of 7-carboxy-7-deazaguanine (CDG) to 7-cyano-7-deazaguanine (preQ(0)). This Psychromonas ingrahamii (strain DSM 17664 / CCUG 51855 / 37) protein is 7-cyano-7-deazaguanine synthase.